We begin with the raw amino-acid sequence, 241 residues long: DNA repair protein RecO (241 aa).

The protein belongs to the RecO family.

Functionally, involved in DNA repair and RecF pathway recombination. The chain is DNA repair protein RecO from Vibrio cholerae serotype O1 (strain ATCC 39541 / Classical Ogawa 395 / O395).